Consider the following 132-residue polypeptide: MVMTDPIADMLTRIRNANMVRHEKLEVPASKMKREIAEILKREGFIRDVEYIEDNKQGILRIFLKYGPNNERVITGLKRISKPGLRVYVKAHEVPRVLNGLGIAILSTSQGILTDKEARQKGTGGEVIAYVW.

It belongs to the universal ribosomal protein uS8 family. As to quaternary structure, part of the 30S ribosomal subunit. Contacts proteins S5 and S12.

One of the primary rRNA binding proteins, it binds directly to 16S rRNA central domain where it helps coordinate assembly of the platform of the 30S subunit. The sequence is that of Small ribosomal subunit protein uS8 from Geobacillus sp. (strain WCH70).